A 1053-amino-acid chain; its full sequence is 3-hydroxy-3-methylglutaryl-coenzyme A reductase (1053 aa).

Residues 1–8 (MIYKLAAR) are Cytoplasmic-facing. A helical transmembrane segment spans residues 9–29 (YPIQVIAIVGILVSMAYFSFL). At 30-203 (EALTQEDFPV…LKIASQASKT (174 aa)) the chain is on the lumenal side. Asn137 carries an N-linked (GlcNAc...) asparagine glycan. A helical membrane pass occupies residues 204 to 224 (ELLIVGTAYACMLISIVSLYL). One can recognise an SSD domain in the interval 204-365 (ELLIVGTAYA…FSFFVAILTL (162 aa)). At 225–232 (KMRRLGSK) the chain is on the cytoplasmic side. A helical transmembrane segment spans residues 233-253 (FWLFFSVLLSTLFSVQFAMTL). The Lumenal portion of the chain corresponds to 254–258 (VRASG). A helical transmembrane segment spans residues 259 to 279 (VRISLVSLIESLPFLINVVAL). Residues 280-320 (DKAAELTRQVITRCSVSDSHSPMHEDIAKACRNAAPPILRH) lie on the Cytoplasmic side of the membrane. 2 helical membrane passes run 321 to 341 (FSFGIVVLAIFSYCNFGIKQF) and 342 to 362 (FLFAAVMIYDLLLLFSFFVAI). Over 363-417 (LTLKLEMRRYNAKDDVRKVLIEEGLSESTARHVADGNDSSATTSAGSRYFKVRYG) the chain is Cytoplasmic. A helical transmembrane segment spans residues 418–438 (TKIILFIFIAFNLFELCSIPF). Residues 439–526 (KHYAATSAAA…NNWSHYISAS (88 aa)) are Lumenal-facing. Residue Asn518 is glycosylated (N-linked (GlcNAc...) asparagine). A helical membrane pass occupies residues 527–547 (FLSKWIVCALSLSIAVNVFLL). The Cytoplasmic segment spans residues 548–1053 (NAARLNSIKE…KSVNSRVPGR (506 aa)). The active-site Charge relay system is Glu712. Position 718–724 (718–724 (STMRGCK)) interacts with CoA. Residues 779–781 (SRF) and 806–814 (DAMGMNMIS) each bind NADP(+). Lys846 functions as the Charge relay system in the catalytic mechanism. 875–877 (VLK) lines the CoA pocket. The active-site Charge relay system is Asp922. 1017 to 1018 (SH) is a binding site for CoA. Catalysis depends on His1018, which acts as the Proton donor. 1022 to 1023 (NR) is a binding site for NADP(+). Ser1024 bears the Phosphoserine mark. A Phosphothreonine modification is found at Thr1028. The tract at residues 1028-1053 (TPAMDSSAKKPATDALKSVNSRVPGR) is disordered.

This sequence belongs to the HMG-CoA reductase family.

It is found in the endoplasmic reticulum membrane. It localises to the nucleus envelope. The catalysed reaction is (R)-mevalonate + 2 NADP(+) + CoA = (3S)-3-hydroxy-3-methylglutaryl-CoA + 2 NADPH + 2 H(+). Its pathway is metabolic intermediate biosynthesis; (R)-mevalonate biosynthesis; (R)-mevalonate from acetyl-CoA: step 3/3. In terms of biological role, part of the first module of ergosterol biosynthesis pathway that includes the early steps of the pathway, conserved across all eukaryotes, and which results in the formation of mevalonate from acetyl-coenzyme A (acetyl-CoA). Hmg1 catalyzes the reduction of hydroxymethylglutaryl-CoA (HMG-CoA) to mevalonate. The first module starts with the action of the cytosolic acetyl-CoA acetyltransferase eg10 that catalyzes the formation of acetoacetyl-CoA. The hydroxymethylglutaryl-CoA synthases erg13 then condenses acetyl-CoA with acetoacetyl-CoA to form HMG-CoA. The rate-limiting step of the early module is the reduction to mevalonate by the 3-hydroxy-3-methylglutaryl-coenzyme A (HMG-CoA) reductases hcs1. The protein is 3-hydroxy-3-methylglutaryl-coenzyme A reductase of Schizosaccharomyces pombe (strain 972 / ATCC 24843) (Fission yeast).